Reading from the N-terminus, the 366-residue chain is Ferredoxin--NADP reductase (366 aa).

The FAD site is built by aspartate 51, glutamine 59, tyrosine 64, valine 104, phenylalanine 139, aspartate 308, and threonine 349.

It belongs to the ferredoxin--NADP reductase type 2 family. In terms of assembly, homodimer. FAD is required as a cofactor.

It carries out the reaction 2 reduced [2Fe-2S]-[ferredoxin] + NADP(+) + H(+) = 2 oxidized [2Fe-2S]-[ferredoxin] + NADPH. This is Ferredoxin--NADP reductase from Methylibium petroleiphilum (strain ATCC BAA-1232 / LMG 22953 / PM1).